The chain runs to 216 residues: Ras-related protein Rab-5C (216 aa).

GTP contacts are provided by Ser-30, Ala-31, Gly-33, Lys-34, Ser-35, Ser-36, His-47, Glu-48, Thr-53, and Gly-79. Residue Ser-35 participates in Mg(2+) binding. 2 consecutive short sequence motifs (switch) follow at residues 45–57 and 78–94; these read QFHEYQESTIGAA and AGQERYHSLAPMYYRGA. Thr-53 provides a ligand contact to Mg(2+). Residue Ser-85 is modified to Phosphoserine; by LRRK2. Residues Asn-134, Lys-135, Asp-137, Ala-165, and Lys-166 each coordinate GTP. The tract at residues 185-216 is disordered; that stretch reads NEPQNATGAPGRNRGVDLQENNPASRSQCCSN. The segment covering 203 to 216 has biased composition (polar residues); sequence QENNPASRSQCCSN. Residues Cys-213 and Cys-214 are each lipidated (S-geranylgeranyl cysteine).

This sequence belongs to the small GTPase superfamily. Rab family. As to quaternary structure, interacts with EEA1. Interacts with INCA1. Interacts with GDI1, GDI2, CHML and CHM; phosphorylation at Ser-85 disrupts this interaction. Requires Mg(2+) as cofactor. In terms of processing, phosphorylation of Ser-85 in the switch II region by LRRK2 prevents the association of RAB regulatory proteins, including CHM, CHML and RAB GDP dissociation inhibitors GDI1 and GDI2. (Microbial infection) Glycosylated on arginine residues by S.typhimurium protein Ssek3.

It localises to the cell membrane. Its subcellular location is the early endosome membrane. The protein resides in the melanosome. It catalyses the reaction GTP + H2O = GDP + phosphate + H(+). With respect to regulation, regulated by guanine nucleotide exchange factors (GEFs) which promote the exchange of bound GDP for free GTP. Regulated by GTPase activating proteins (GAPs) which increase the GTP hydrolysis activity. Inhibited by GDP dissociation inhibitors (GDIs). Functionally, the small GTPases Rab are key regulators of intracellular membrane trafficking, from the formation of transport vesicles to their fusion with membranes. Rabs cycle between an inactive GDP-bound form and an active GTP-bound form that is able to recruit to membranes different sets of downstream effectors directly responsible for vesicle formation, movement, tethering and fusion. The polypeptide is Ras-related protein Rab-5C (Homo sapiens (Human)).